A 267-amino-acid polypeptide reads, in one-letter code: Methylglyoxal reductase DkgB (267 aa).

The Proton donor role is filled by tyrosine 39. Residue histidine 97 coordinates substrate. Residue 179 to 231 (MTLAYGKALAEPVIKTIAEQHGATPAQVILSWAMQLGYGVIPSSTKAANLASN) coordinates NADP(+).

Belongs to the aldo/keto reductase family. In terms of assembly, monomer.

Its subcellular location is the cytoplasm. The catalysed reaction is hydroxyacetone + NADP(+) = methylglyoxal + NADPH + H(+). In terms of biological role, aldo-keto reductase that significantly contributes to cellular methylglyoxal detoxification by catalyzing the NADPH-dependent conversion of methylglyoxal to acetol. This chain is Methylglyoxal reductase DkgB, found in Yersinia pestis.